The primary structure comprises 1262 residues: Tau-tubulin kinase homolog Asator (1262 aa).

The tract at residues 13 to 35 (NASAPDDGNQSCQPSSKQDQYLS) is disordered. Polar residues predominate over residues 20 to 35 (GNQSCQPSSKQDQYLS). Residues 173–436 (WKVVRKIGGG…MLIGLFERCM (264 aa)) form the Protein kinase domain. Residues 179 to 187 (IGGGGFGEI) and Lys-202 each bind ATP. Asp-293 serves as the catalytic Proton acceptor. Disordered regions lie at residues 662 to 724 (TVTN…TSNA), 755 to 792 (RSATSTNLRPSSSASQRINSGSTIGGAVGNGSNTARSS), and 984 to 1003 (KDSALQLNSTNDSLDKSRHR). The span at 667 to 679 (KTSEVNRSTEEQK) shows a compositional bias: basic and acidic residues. Residues 755–776 (RSATSTNLRPSSSASQRINSGS) show a composition bias toward polar residues.

This sequence belongs to the protein kinase superfamily. CK1 Ser/Thr protein kinase family. Interacts with Mgtor. Mg(2+) is required as a cofactor. Detected in larval brain.

The protein localises to the cytoplasm. It is found in the cytoskeleton. Its subcellular location is the spindle. It carries out the reaction L-seryl-[protein] + ATP = O-phospho-L-seryl-[protein] + ADP + H(+). The enzyme catalyses L-threonyl-[protein] + ATP = O-phospho-L-threonyl-[protein] + ADP + H(+). Functionally, probable serine/threonine protein kinase. This Drosophila melanogaster (Fruit fly) protein is Tau-tubulin kinase homolog Asator.